The sequence spans 371 residues: Protein NDRG2 (371 aa).

Residues 1-21 form a disordered region; it reads MAELQEVQITEEKPLLPGQTP. Ala2 carries the post-translational modification N-acetylalanine. Thr20 is modified (phosphothreonine). 2 positions are modified to phosphoserine: Ser326 and Ser328. At Thr330 the chain carries Phosphothreonine. Phosphoserine is present on Ser332. Thr334 is modified (phosphothreonine). The tract at residues 334–371 is disordered; sequence TSAASVDGNRSRSRTLSQSSESGTLSSGPPGHTMEVSC. Ser335, Ser338, and Ser344 each carry phosphoserine. The segment covering 347-361 has biased composition (low complexity); sequence RTLSQSSESGTLSSG. A Phosphothreonine modification is found at Thr348. Residues Ser350, Ser352, Ser353, and Ser355 each carry the phosphoserine modification. Thr357 is modified (phosphothreonine). Position 370 is a phosphoserine (Ser370).

This sequence belongs to the NDRG family. Interacts with CTNNB1.

It localises to the cytoplasm. It is found in the perinuclear region. Its subcellular location is the cell projection. The protein resides in the growth cone. Functionally, contributes to the regulation of the Wnt signaling pathway. Down-regulates CTNNB1-mediated transcriptional activation of target genes, such as CCND1, and may thereby act as tumor suppressor. May be involved in dendritic cell and neuron differentiation. The polypeptide is Protein NDRG2 (NDRG2) (Pongo abelii (Sumatran orangutan)).